We begin with the raw amino-acid sequence, 407 residues long: Carbamoyl phosphate synthase small chain (407 aa).

The interval 1–205 (MTETTPKTAP…LQDGYGEQDA (205 aa)) is CPSase. Positions 60, 257, and 259 each coordinate L-glutamine. Residues 209-397 (HVVALDFGVK…INLIRERKGQ (189 aa)) enclose the Glutamine amidotransferase type-1 domain. Cys-286 functions as the Nucleophile in the catalytic mechanism. Residues Leu-287, Gln-290, Asn-328, Gly-330, and Phe-331 each coordinate L-glutamine. Residues His-370 and Glu-372 contribute to the active site.

It belongs to the CarA family. In terms of assembly, composed of two chains; the small (or glutamine) chain promotes the hydrolysis of glutamine to ammonia, which is used by the large (or ammonia) chain to synthesize carbamoyl phosphate. Tetramer of heterodimers (alpha,beta)4.

The catalysed reaction is hydrogencarbonate + L-glutamine + 2 ATP + H2O = carbamoyl phosphate + L-glutamate + 2 ADP + phosphate + 2 H(+). It catalyses the reaction L-glutamine + H2O = L-glutamate + NH4(+). The protein operates within amino-acid biosynthesis; L-arginine biosynthesis; carbamoyl phosphate from bicarbonate: step 1/1. It functions in the pathway pyrimidine metabolism; UMP biosynthesis via de novo pathway; (S)-dihydroorotate from bicarbonate: step 1/3. Functionally, small subunit of the glutamine-dependent carbamoyl phosphate synthetase (CPSase). CPSase catalyzes the formation of carbamoyl phosphate from the ammonia moiety of glutamine, carbonate, and phosphate donated by ATP, constituting the first step of 2 biosynthetic pathways, one leading to arginine and/or urea and the other to pyrimidine nucleotides. The small subunit (glutamine amidotransferase) binds and cleaves glutamine to supply the large subunit with the substrate ammonia. The sequence is that of Carbamoyl phosphate synthase small chain from Brucella suis (strain ATCC 23445 / NCTC 10510).